Reading from the N-terminus, the 477-residue chain is Leukotoxin export protein LtxD (477 aa).

A helical transmembrane segment spans residues 64-84 (IMLFLTLAIIVSIFSNVEIIA). Residues 206–287 (LNLNKKEAEK…ENEVLLAKEE (82 aa)) adopt a coiled-coil conformation.

The protein belongs to the membrane fusion protein (MFP) (TC 8.A.1) family. Probably part of a complex composed of LtxB, LtxD and TdeA, which forms a single transport channel across the two membranes.

The protein resides in the cell inner membrane. Involved in the export of the LtxA leukotoxin. The protein is Leukotoxin export protein LtxD of Aggregatibacter actinomycetemcomitans (Actinobacillus actinomycetemcomitans).